A 362-amino-acid polypeptide reads, in one-letter code: GDSL esterase/lipase At5g45670 (362 aa).

An N-terminal signal peptide occupies residues 1-23; it reads MARMSLMIMMIMVAVTMINIAKS. Residue S36 is the Nucleophile of the active site. Active-site residues include D326 and H329.

Belongs to the 'GDSL' lipolytic enzyme family.

It localises to the secreted. This chain is GDSL esterase/lipase At5g45670, found in Arabidopsis thaliana (Mouse-ear cress).